The following is a 238-amino-acid chain: Ribonuclease PH (238 aa).

The tract at residues Gly64–Arg86 is disordered. Residues Arg86 and Gly124–Arg126 contribute to the phosphate site.

The protein belongs to the RNase PH family. As to quaternary structure, homohexameric ring arranged as a trimer of dimers.

The enzyme catalyses tRNA(n+1) + phosphate = tRNA(n) + a ribonucleoside 5'-diphosphate. Phosphorolytic 3'-5' exoribonuclease that plays an important role in tRNA 3'-end maturation. Removes nucleotide residues following the 3'-CCA terminus of tRNAs; can also add nucleotides to the ends of RNA molecules by using nucleoside diphosphates as substrates, but this may not be physiologically important. Probably plays a role in initiation of 16S rRNA degradation (leading to ribosome degradation) during starvation. The polypeptide is Ribonuclease PH (Methylobacillus flagellatus (strain ATCC 51484 / DSM 6875 / VKM B-1610 / KT)).